Here is a 306-residue protein sequence, read N- to C-terminus: Pantothenate kinase (306 aa).

91 to 98 serves as a coordination point for ATP; sequence GSVAVGKS.

Belongs to the prokaryotic pantothenate kinase family.

The protein localises to the cytoplasm. The catalysed reaction is (R)-pantothenate + ATP = (R)-4'-phosphopantothenate + ADP + H(+). The protein operates within cofactor biosynthesis; coenzyme A biosynthesis; CoA from (R)-pantothenate: step 1/5. The polypeptide is Pantothenate kinase (Streptococcus pneumoniae serotype 2 (strain D39 / NCTC 7466)).